The sequence spans 78 residues: Small ribosomal subunit protein uS17 (78 aa).

The protein belongs to the universal ribosomal protein uS17 family. As to quaternary structure, part of the 30S ribosomal subunit.

In terms of biological role, one of the primary rRNA binding proteins, it binds specifically to the 5'-end of 16S ribosomal RNA. This Agrobacterium fabrum (strain C58 / ATCC 33970) (Agrobacterium tumefaciens (strain C58)) protein is Small ribosomal subunit protein uS17.